A 416-amino-acid polypeptide reads, in one-letter code: CinA-like protein (416 aa).

Belongs to the CinA family.

This chain is CinA-like protein, found in Amoebophilus asiaticus (strain 5a2).